Reading from the N-terminus, the 233-residue chain is Favin (233 aa).

Mn(2+) is bound by residues Glu120 and Asp122. 4 residues coordinate Ca(2+): Asp122, Phe124, Asn126, and Asp130. Asp130 and His137 together coordinate Mn(2+). An N-linked (GlcNAc...) asparagine glycan is attached at Asn168.

The protein belongs to the leguminous lectin family. In terms of assembly, heterodimer of an alpha and a beta chain.

This is Favin from Vicia faba (Broad bean).